A 339-amino-acid chain; its full sequence is Nicotinate-nucleotide--dimethylbenzimidazole phosphoribosyltransferase (339 aa).

The active-site Proton acceptor is the Glu306.

This sequence belongs to the CobT family.

It catalyses the reaction 5,6-dimethylbenzimidazole + nicotinate beta-D-ribonucleotide = alpha-ribazole 5'-phosphate + nicotinate + H(+). Its pathway is nucleoside biosynthesis; alpha-ribazole biosynthesis; alpha-ribazole from 5,6-dimethylbenzimidazole: step 1/2. Catalyzes the synthesis of alpha-ribazole-5'-phosphate from nicotinate mononucleotide (NAMN) and 5,6-dimethylbenzimidazole (DMB). In Brucella anthropi (strain ATCC 49188 / DSM 6882 / CCUG 24695 / JCM 21032 / LMG 3331 / NBRC 15819 / NCTC 12168 / Alc 37) (Ochrobactrum anthropi), this protein is Nicotinate-nucleotide--dimethylbenzimidazole phosphoribosyltransferase.